The primary structure comprises 67 residues: Large ribosomal subunit protein bL35 (67 aa).

Belongs to the bacterial ribosomal protein bL35 family.

In Zymomonas mobilis subsp. mobilis (strain ATCC 31821 / ZM4 / CP4), this protein is Large ribosomal subunit protein bL35.